The following is a 665-amino-acid chain: LisH domain-containing protein ARMC9 (665 aa).

A LisH domain is found at 7–39 (HESELLGLVKEYLDFAEFEDTLKTFSKECKIKG). Residues 201-235 (ENGQSNKEMLQQLHQQLVEAERRSMTYLKRYNKIQ) adopt a coiled-coil conformation. Residue serine 582 is modified to Phosphoserine. The tract at residues 642-665 (VQWSGDEPLQRPVTPGGHRNGYPV) is disordered.

As to quaternary structure, interacts with TOGARAM1, CCDC66, CEP104, CSPP1 and CEP290. Interacts with NDUFAF2.

The protein localises to the cytoplasm. Its subcellular location is the cytoskeleton. It localises to the cilium basal body. It is found in the cell projection. The protein resides in the cilium. The protein localises to the microtubule organizing center. Its subcellular location is the centrosome. It localises to the centriole. Functionally, involved in ciliogenesis. It is required for appropriate acetylation and polyglutamylation of ciliary microtubules, and regulation of cilium length. Acts as a positive regulator of hedgehog (Hh)signaling. May participate in the trafficking and/or retention of GLI2 and GLI3 proteins at the ciliary tip. In Pongo abelii (Sumatran orangutan), this protein is LisH domain-containing protein ARMC9 (ARMC9).